A 567-amino-acid chain; its full sequence is Thiol:disulfide interchange protein DsbD (567 aa).

The N-terminal stretch at 1–19 (MAQRIFTLILLLCSTSAFA) is a signal peptide. 2 cysteine pairs are disulfide-bonded: cysteine 122/cysteine 128 and cysteine 185/cysteine 307. The next 7 membrane-spanning stretches (helical) occupy residues 170 to 192 (ALWA…MYPL), 212 to 234 (LAFI…VAAA), 246 to 268 (YVLI…LFTL), 297 to 319 (GAIA…LLYI), 326 to 348 (WLGG…LVTV), 358 to 380 (GPWM…VFLL), and 387 to 409 (AWGL…ITSL). In terms of domain architecture, Thioredoxin spans 435–567 (QDWAFGSPSA…FSAHLHDRQP (133 aa)). Residues cysteine 482 and cysteine 485 are joined by a disulfide bond.

Belongs to the thioredoxin family. DsbD subfamily.

It is found in the cell inner membrane. It catalyses the reaction [protein]-dithiol + NAD(+) = [protein]-disulfide + NADH + H(+). The enzyme catalyses [protein]-dithiol + NADP(+) = [protein]-disulfide + NADPH + H(+). Its function is as follows. Required to facilitate the formation of correct disulfide bonds in some periplasmic proteins and for the assembly of the periplasmic c-type cytochromes. Acts by transferring electrons from cytoplasmic thioredoxin to the periplasm. This transfer involves a cascade of disulfide bond formation and reduction steps. This is Thiol:disulfide interchange protein DsbD from Salmonella typhimurium (strain LT2 / SGSC1412 / ATCC 700720).